We begin with the raw amino-acid sequence, 430 residues long: Uric acid permease PucK (430 aa).

14 consecutive transmembrane segments (helical) span residues 18-38 (MLAM…AIGL), 43-63 (LTYL…LQLW), 67-87 (YFGI…GPMI), 97-117 (AIYG…GFFG), 122-142 (FFPP…LIPT), 163-183 (LLGF…KGFI), 185-205 (SIAI…MGKV), 209-229 (EVLE…PPTF), 233-253 (AVVT…GVYF), 274-294 (AEGL…TAFS), 310-330 (VIAI…AAAL), 333-353 (VIPT…VISY), 369-389 (LLII…PALF), and 398-418 (VLAG…HAFF).

Belongs to the nucleobase:cation symporter-2 (NCS2) (TC 2.A.40) family.

Its subcellular location is the cell membrane. In terms of biological role, uptake of uric acid. This Bacillus subtilis (strain 168) protein is Uric acid permease PucK (pucK).